We begin with the raw amino-acid sequence, 97 residues long: MAGLIRVTPEELRAMAKQYGVESQEVLNQVDRLNRMISDLKSMWEGASSEAFADQYEQLKPSFIKMSDLLQDVNQQLDQTANTLESTDQDIANQIRG.

Residues 21–94 are a coiled coil; it reads VESQEVLNQV…ESTDQDIANQ (74 aa).

The protein belongs to the WXG100 family. sagEsxA-like subfamily. Homodimer.

Its subcellular location is the secreted. Its function is as follows. Required to deliver LXG toxins to target cells. The polypeptide is Protein YukE (yukE) (Bacillus subtilis (strain 168)).